The sequence spans 168 residues: Cyanate hydratase (168 aa).

Catalysis depends on residues Arg94, Glu97, and Ser120.

The protein belongs to the cyanase family.

It catalyses the reaction cyanate + hydrogencarbonate + 3 H(+) = NH4(+) + 2 CO2. Catalyzes the reaction of cyanate with bicarbonate to produce ammonia and carbon dioxide. The sequence is that of Cyanate hydratase from Oryza sativa subsp. indica (Rice).